Here is a 200-residue protein sequence, read N- to C-terminus: 3-isopropylmalate dehydratase small subunit (200 aa).

It belongs to the LeuD family. LeuD type 1 subfamily. In terms of assembly, heterodimer of LeuC and LeuD.

The enzyme catalyses (2R,3S)-3-isopropylmalate = (2S)-2-isopropylmalate. The protein operates within amino-acid biosynthesis; L-leucine biosynthesis; L-leucine from 3-methyl-2-oxobutanoate: step 2/4. Functionally, catalyzes the isomerization between 2-isopropylmalate and 3-isopropylmalate, via the formation of 2-isopropylmaleate. The sequence is that of 3-isopropylmalate dehydratase small subunit from Proteus mirabilis (strain HI4320).